Here is a 576-residue protein sequence, read N- to C-terminus: MNIQVLLSDKVSQALIAAGAPADCEAQVRQSAKAQFGDYQANGVMSVAKKLGMPPRQLAEKVVQLLDLGDVASKVEIAGPGFINIFLNSQWVAQQADRVLSAPKLDIAPVKQQTIVIDYSAPNVAKEMHVGHLRSTIIGDAAARTQEFLGHKVIRANHVGDWGTQFGMLIAYLEKMQNENASDMGLSDLEQFYREAKKHYDEDADFAERARAYVVKLQGGDQYCLKMWRKLVDITMAQNQLTYNRLNVTLTEDDVMGESLYNAMLPGIVADLKAKGLAVESEGATVVFLDEYKNKDGEPMGVIIQKKDGGYLYTTTDIACAKYRYETLGADRVLYYIDSRQHQHLMQAWTIVRKAGYIPDSLSLEHHMFGMMLGKDGKPFKTRSGGTVKLSDLLDEAVDRAGKLIAEKNPDMPAEEMQSLANAVGIGAVKYADLSKSRTTDYIFDWDNMLAFEGNTAPYMQYAYTRVASVFKRAGVDESNLTLPLVMTEEREITLATRLLQFEEVITTVAREGTPHVMCSYLYDLAGLFSGFYEHCQILNADSEEARQSRLKLSLLTAKTLKVGLDTLGIETVERM.

A 'HIGH' region motif is present at residues 122–132; the sequence is PNVAKEMHVGH.

This sequence belongs to the class-I aminoacyl-tRNA synthetase family. As to quaternary structure, monomer.

The protein localises to the cytoplasm. It carries out the reaction tRNA(Arg) + L-arginine + ATP = L-arginyl-tRNA(Arg) + AMP + diphosphate. This chain is Arginine--tRNA ligase, found in Serratia proteamaculans (strain 568).